A 56-amino-acid polypeptide reads, in one-letter code: Large ribosomal subunit protein bL32 (56 aa).

A disordered region spans residues 1–38 (MAVQQNKKSRSRRDMRRSHDALTTAAVSVDKTSGETHL). The span at 7 to 16 (KKSRSRRDMR) shows a compositional bias: basic residues.

This sequence belongs to the bacterial ribosomal protein bL32 family.

This is Large ribosomal subunit protein bL32 from Histophilus somni (strain 129Pt) (Haemophilus somnus).